A 149-amino-acid chain; its full sequence is Large ribosomal subunit protein bL9 (149 aa).

Belongs to the bacterial ribosomal protein bL9 family.

Its function is as follows. Binds to the 23S rRNA. The protein is Large ribosomal subunit protein bL9 of Rubrobacter xylanophilus (strain DSM 9941 / JCM 11954 / NBRC 16129 / PRD-1).